Reading from the N-terminus, the 436-residue chain is GTPase Der (436 aa).

2 consecutive EngA-type G domains span residues Pro-4 to Gly-167 and Ile-176 to Ala-351. GTP is bound by residues Gly-10–Ser-17, Asp-57–Ile-61, Asn-119–Asp-122, Gly-182–Ser-189, Asp-229–Met-233, and Asn-294–Asp-297. In terms of domain architecture, KH-like spans Met-352–Lys-436.

It belongs to the TRAFAC class TrmE-Era-EngA-EngB-Septin-like GTPase superfamily. EngA (Der) GTPase family. In terms of assembly, associates with the 50S ribosomal subunit.

Functionally, GTPase that plays an essential role in the late steps of ribosome biogenesis. This Geobacillus kaustophilus (strain HTA426) protein is GTPase Der.